The sequence spans 284 residues: Small ribosomal subunit protein uS5z (284 aa).

Residues 1–19 (MAERGGEGGAERGGDRGDF) are compositionally biased toward basic and acidic residues. Residues 1–51 (MAERGGEGGAERGGDRGDFGRGFGGGRGGGRGRDRGPRGRGRRGGRASEET) form a disordered region. Gly residues predominate over residues 20–29 (GRGFGGGRGG). The 64-residue stretch at 95-158 (LKDEVMKIMP…ILAKLSVVPV (64 aa)) folds into the S5 DRBM domain.

It belongs to the universal ribosomal protein uS5 family.

In Arabidopsis thaliana (Mouse-ear cress), this protein is Small ribosomal subunit protein uS5z (RPS2A).